We begin with the raw amino-acid sequence, 686 residues long: Calponin homology and LIM domain-containing protein (686 aa).

A Calponin-homology (CH) domain is found at 15–120; the sequence is ELALDESRDW…ITLYWLGRAA (106 aa). LIM zinc-binding domains lie at 139-200 and 219-279; these read MNCS…ATNL and NKCS…SCGK. The segment covering 305–314 has biased composition (basic and acidic residues); it reads KQVMDKDGHD. The segment at 305-345 is disordered; it reads KQVMDKDGHDHHHHNHNKPTTTTTTTNSNSPLAKKKSDSCK. Residues 322–333 show a composition bias toward low complexity; sequence KPTTTTTTTNSN. 4 LIM zinc-binding domains span residues 373 to 435, 437 to 495, 519 to 579, and 583 to 658; these read GTCG…NNKS, KNCH…LNQY, DRCV…IQQS, and DHCA…ASSS.

In terms of assembly, interacts with limF and rab21.

Its function is as follows. Involved in the regulation of phagocytosis. May repress rab21. The polypeptide is Calponin homology and LIM domain-containing protein (ChLim) (Dictyostelium discoideum (Social amoeba)).